The following is a 299-amino-acid chain: Protoheme IX farnesyltransferase (299 aa).

9 helical membrane passes run 25–45 (VVLLMLITSLVGMFLATRAGV), 47–67 (WTVLLFGNLGIGLCAGAAAAV), 95–115 (AAAIAFALLLATAGMGLLLLF), 119–139 (LAAWLTLASLLGYAVIYTGFL), 147–167 (IVIGGLAGAAPPLLGWVAVTG), 173–193 (PLLLVLIIFAWTPPHFWALAI), 218–238 (VHILLYTLVMFAVTLLPYAIH), 243–263 (LYLVCALLLGARFLHWAWVLY), and 279–299 (IWYLFLLFIALLADHYLLLNI).

It belongs to the UbiA prenyltransferase family. Protoheme IX farnesyltransferase subfamily.

The protein resides in the cell inner membrane. The catalysed reaction is heme b + (2E,6E)-farnesyl diphosphate + H2O = Fe(II)-heme o + diphosphate. It participates in porphyrin-containing compound metabolism; heme O biosynthesis; heme O from protoheme: step 1/1. Functionally, converts heme B (protoheme IX) to heme O by substitution of the vinyl group on carbon 2 of heme B porphyrin ring with a hydroxyethyl farnesyl side group. This is Protoheme IX farnesyltransferase from Ectopseudomonas mendocina (strain ymp) (Pseudomonas mendocina).